Reading from the N-terminus, the 336-residue chain is Tetraacyldisaccharide 4'-kinase (336 aa).

60 to 67 (TVGGTGKT) provides a ligand contact to ATP.

It belongs to the LpxK family.

It carries out the reaction a lipid A disaccharide + ATP = a lipid IVA + ADP + H(+). It functions in the pathway glycolipid biosynthesis; lipid IV(A) biosynthesis; lipid IV(A) from (3R)-3-hydroxytetradecanoyl-[acyl-carrier-protein] and UDP-N-acetyl-alpha-D-glucosamine: step 6/6. Transfers the gamma-phosphate of ATP to the 4'-position of a tetraacyldisaccharide 1-phosphate intermediate (termed DS-1-P) to form tetraacyldisaccharide 1,4'-bis-phosphate (lipid IVA). In Pseudomonas fluorescens (strain Pf0-1), this protein is Tetraacyldisaccharide 4'-kinase.